Here is a 189-residue protein sequence, read N- to C-terminus: Segregation and condensation protein B (189 aa).

It belongs to the ScpB family. As to quaternary structure, homodimer. Homodimerization may be required to stabilize the binding of ScpA to the Smc head domains. Component of a cohesin-like complex composed of ScpA, ScpB and the Smc homodimer, in which ScpA and ScpB bind to the head domain of Smc. The presence of the three proteins is required for the association of the complex with DNA.

It is found in the cytoplasm. Its function is as follows. Participates in chromosomal partition during cell division. May act via the formation of a condensin-like complex containing Smc and ScpA that pull DNA away from mid-cell into both cell halves. The protein is Segregation and condensation protein B of Streptococcus pneumoniae serotype 19F (strain G54).